Reading from the N-terminus, the 313-residue chain is Small ribosomal subunit biogenesis GTPase RsgA (313 aa).

Positions 80 to 237 (KVALRQVIVS…LIDTPGIKEF (158 aa)) constitute a CP-type G domain. GTP is bound by residues 129-132 (NKVD) and 180-188 (GQSGVGKSS). Residues Cys-261, Cys-266, His-268, and Cys-274 each contribute to the Zn(2+) site.

This sequence belongs to the TRAFAC class YlqF/YawG GTPase family. RsgA subfamily. In terms of assembly, monomer. Associates with 30S ribosomal subunit, binds 16S rRNA. Zn(2+) is required as a cofactor.

It localises to the cytoplasm. In terms of biological role, one of several proteins that assist in the late maturation steps of the functional core of the 30S ribosomal subunit. Helps release RbfA from mature subunits. May play a role in the assembly of ribosomal proteins into the subunit. Circularly permuted GTPase that catalyzes slow GTP hydrolysis, GTPase activity is stimulated by the 30S ribosomal subunit. The polypeptide is Small ribosomal subunit biogenesis GTPase RsgA (Borrelia recurrentis (strain A1)).